We begin with the raw amino-acid sequence, 148 residues long: Photosystem II extrinsic protein U, chloroplastic (148 aa).

Residues 1 to 32 constitute a chloroplast transit peptide; the sequence is MKLAVFAVLISTVAAFVAPNGVQRAATTELNA. The N-terminal 22 residues, 33 to 54, are a transit peptide targeting the thylakoid; sequence ERREFLSAAAVAAGLAFPLTAN.

It belongs to the PsbU family. PSII is composed of 1 copy each of membrane proteins PsbA, PsbB, PsbC, PsbD, PsbE, PsbF, PsbH, PsbI, PsbJ, PsbK, PsbL, PsbM, PsbT, PsbX, PsbY, PsbZ, Psb30/Ycf12, at least 3 peripheral proteins of the oxygen-evolving complex and a large number of cofactors. It forms dimeric complexes. The oxygen-evolving complex may be composed of PsbO, PsbQ', PsbV and PsbU.

It localises to the plastid. The protein resides in the chloroplast thylakoid membrane. Its function is as follows. One of the extrinsic, lumenal subunits of photosystem II (PSII), which stabilize and protect the oxygen-evolving complex. PSII is a light-driven water plastoquinone oxidoreductase, using light energy to abstract electrons from H(2)O, generating a proton gradient subsequently used for ATP formation. Stabilizes the structure of photosystem II oxygen-evolving complex (OEC), the ion environment of oxygen evolution and protects the OEC against heat-induced inactivation. The chain is Photosystem II extrinsic protein U, chloroplastic from Phaeodactylum tricornutum (Diatom).